The chain runs to 141 residues: Hemoglobin subunit alpha (141 aa).

The Globin domain occupies 1 to 141; sequence VLSPADKTNI…VSTVLTSKYR (141 aa). Ser3 carries the phosphoserine modification. N6-succinyllysine is present on Lys7. The residue at position 8 (Thr8) is a Phosphothreonine. Lys11 is modified (N6-succinyllysine). Lys16 bears the N6-acetyllysine; alternate mark. Residue Lys16 is modified to N6-succinyllysine; alternate. Tyr24 is modified (phosphotyrosine). At Ser35 the chain carries Phosphoserine. The residue at position 40 (Lys40) is an N6-succinyllysine. At Ser49 the chain carries Phosphoserine. His58 contacts O2. His87 provides a ligand contact to heme b. Ser102 is subject to Phosphoserine. Position 108 is a phosphothreonine (Thr108). Position 124 is a phosphoserine (Ser124). A phosphothreonine mark is found at Thr134 and Thr137. The residue at position 138 (Ser138) is a Phosphoserine.

The protein belongs to the globin family. As to quaternary structure, heterotetramer of two alpha chains and two beta chains. As to expression, red blood cells.

Its function is as follows. Involved in oxygen transport from the lung to the various peripheral tissues. Hemopressin acts as an antagonist peptide of the cannabinoid receptor CNR1. Hemopressin-binding efficiently blocks cannabinoid receptor CNR1 and subsequent signaling. The polypeptide is Hemoglobin subunit alpha (HBA) (Chrysocyon brachyurus (Maned wolf)).